The following is a 317-amino-acid chain: Ribonuclease Z (317 aa).

7 residues coordinate Zn(2+): H63, H65, D67, H68, H143, D213, and H273. D67 (proton acceptor) is an active-site residue.

It belongs to the RNase Z family. Homodimer. Zn(2+) serves as cofactor.

The enzyme catalyses Endonucleolytic cleavage of RNA, removing extra 3' nucleotides from tRNA precursor, generating 3' termini of tRNAs. A 3'-hydroxy group is left at the tRNA terminus and a 5'-phosphoryl group is left at the trailer molecule.. Zinc phosphodiesterase, which displays some tRNA 3'-processing endonuclease activity. Probably involved in tRNA maturation, by removing a 3'-trailer from precursor tRNA. This is Ribonuclease Z from Methanocaldococcus jannaschii (strain ATCC 43067 / DSM 2661 / JAL-1 / JCM 10045 / NBRC 100440) (Methanococcus jannaschii).